The sequence spans 440 residues: Xaa-Pro dipeptidase (440 aa).

Residues D244, D255, H336, E381, and E420 each contribute to the Mn(2+) site.

It belongs to the peptidase M24B family. Bacterial-type prolidase subfamily. It depends on Mn(2+) as a cofactor.

It carries out the reaction Xaa-L-Pro dipeptide + H2O = an L-alpha-amino acid + L-proline. Functionally, splits dipeptides with a prolyl residue in the C-terminal position. The sequence is that of Xaa-Pro dipeptidase from Pseudoalteromonas translucida (strain TAC 125).